Consider the following 500-residue polypeptide: Probable cytosol aminopeptidase (500 aa).

The Mn(2+) site is built by Lys262 and Asp267. Residue Lys274 is part of the active site. Positions 285, 344, and 346 each coordinate Mn(2+). Arg348 is a catalytic residue.

The protein belongs to the peptidase M17 family. Requires Mn(2+) as cofactor.

The protein localises to the cytoplasm. It carries out the reaction Release of an N-terminal amino acid, Xaa-|-Yaa-, in which Xaa is preferably Leu, but may be other amino acids including Pro although not Arg or Lys, and Yaa may be Pro. Amino acid amides and methyl esters are also readily hydrolyzed, but rates on arylamides are exceedingly low.. It catalyses the reaction Release of an N-terminal amino acid, preferentially leucine, but not glutamic or aspartic acids.. In terms of biological role, presumably involved in the processing and regular turnover of intracellular proteins. Catalyzes the removal of unsubstituted N-terminal amino acids from various peptides. This Ehrlichia ruminantium (strain Gardel) protein is Probable cytosol aminopeptidase.